Reading from the N-terminus, the 90-residue chain is Iron oxidase (90 aa).

The segment at residues 1–37 is a signal peptide (tat-type signal); it reads MSEKDKMITRRDALRNIAVVVGSVATTTMMGVGVADA. [4Fe-4S] cluster is bound by residues Cys57, Cys60, Cys69, and Cys82.

Belongs to the high-potential iron-sulfur protein (HiPIP) family. In terms of assembly, homomultimer. Predicted to be exported by the Tat system. The position of the signal peptide cleavage has been experimentally proven.

The protein resides in the periplasm. Its function is as follows. Catalyzes the oxidation of Fe(2+) to Fe(3+) coupled to cytochrome c552 reduction. This chain is Iron oxidase (iro), found in Acidithiobacillus ferrooxidans (Thiobacillus ferrooxidans).